An 82-amino-acid chain; its full sequence is UPF0291 protein PEPE_0871 (82 aa).

This sequence belongs to the UPF0291 family.

It localises to the cytoplasm. This chain is UPF0291 protein PEPE_0871, found in Pediococcus pentosaceus (strain ATCC 25745 / CCUG 21536 / LMG 10740 / 183-1w).